The following is a 78-amino-acid chain: Probable Fe(2+)-trafficking protein (78 aa).

The protein belongs to the Fe(2+)-trafficking protein family. As to quaternary structure, monomer.

Its function is as follows. Could be a mediator in iron transactions between iron acquisition and iron-requiring processes, such as synthesis and/or repair of Fe-S clusters in biosynthetic enzymes. The sequence is that of Probable Fe(2+)-trafficking protein from Buchnera aphidicola subsp. Schizaphis graminum (strain Sg).